Consider the following 117-residue polypeptide: Alpha-endosulfine (117 aa).

The tract at residues 1–53 (MAAPLGTGARAEDSGQEKQDSQEKETVIPERAEEAKLKAKYPNLGQKPGGSDF) is disordered. Residues 10-37 (RAEDSGQEKQDSQEKETVIPERAEEAKL) are compositionally biased toward basic and acidic residues. Serine 67 is subject to Phosphoserine; by GWL. A disordered region spans residues 76 to 117 (KMKNKQLPTAGPDKNLVTGDHIPKPQDLPQRKSSLVASKLAG).

Belongs to the endosulfine family. Phosphorylation at Ser-67 by GWL during mitosis is essential for interaction with PPP2R2D (PR55-delta) and subsequent inactivation of PP2A.

It is found in the cytoplasm. Functionally, protein phosphatase inhibitor that specifically inhibits protein phosphatase 2A (PP2A) during mitosis. When phosphorylated at Ser-67 during mitosis, specifically interacts with PPP2R2D (PR55-delta) and inhibits its activity, leading to inactivation of PP2A, an essential condition to keep cyclin-B1-CDK1 activity high during M phase. The protein is Alpha-endosulfine (ENSA) of Gallus gallus (Chicken).